The chain runs to 126 residues: MPEPSKSAPAPKKGSKKAISKAQKKDGKKRKRSRKESYSVYVYKVLKQVHPDTGISSKAMGIMNSFVNDIFERIASEASRLAHYNKRSTITSREIQTAVRLLLPGELAKHAVSEGTKAVTKYTSSK.

Residues 1 to 12 (MPEPSKSAPAPK) are compositionally biased toward low complexity. The segment at 1–36 (MPEPSKSAPAPKKGSKKAISKAQKKDGKKRKRSRKE) is disordered. P2 bears the N-acetylproline mark. E3 is modified (ADP-ribosyl glutamic acid). An N6-(2-hydroxyisobutyryl)lysine; alternate modification is found at K6. K6 is subject to N6-(beta-hydroxybutyryl)lysine; alternate. Residue K6 is modified to N6-acetyllysine; alternate. Position 6 is an N6-butyryllysine; alternate (K6). The residue at position 6 (K6) is an N6-crotonyllysine; alternate. K6 is modified (N6-lactoyllysine; alternate). Residue K6 forms a Glycyl lysine isopeptide (Lys-Gly) (interchain with G-Cter in SUMO2); alternate linkage. S7 is modified (ADP-ribosylserine). At K12 the chain carries N6-(beta-hydroxybutyryl)lysine; alternate. Residues K12 and K13 each carry the N6-acetyllysine; alternate modification. Residues K12 and K13 each carry the N6-crotonyllysine; alternate modification. Residue K12 is modified to N6-lactoyllysine; alternate. K13 is modified (N6-(2-hydroxyisobutyryl)lysine; alternate). S15 is modified (phosphoserine; by STK4/MST1). K16, K17, K21, and K24 each carry N6-acetyllysine; alternate. An N6-crotonyllysine; alternate mark is found at K16, K17, K21, and K24. An N6-lactoyllysine; alternate mark is found at K16, K17, K21, and K24. An N6-glutaryllysine; alternate modification is found at K17. N6-(2-hydroxyisobutyryl)lysine; alternate occurs at positions 21 and 24. The residue at position 21 (K21) is an N6-(beta-hydroxybutyryl)lysine; alternate. An N6-butyryllysine; alternate modification is found at K21. A Glycyl lysine isopeptide (Lys-Gly) (interchain with G-Cter in SUMO2); alternate cross-link involves residue K21. At K25 the chain carries N6-(2-hydroxyisobutyryl)lysine. K35 is modified (N6-(2-hydroxyisobutyryl)lysine; alternate). An N6-(beta-hydroxybutyryl)lysine; alternate modification is found at K35. An N6-crotonyllysine; alternate modification is found at K35. K35 bears the N6-glutaryllysine; alternate mark. N6-succinyllysine; alternate is present on K35. K35 participates in a covalent cross-link: Glycyl lysine isopeptide (Lys-Gly) (interchain with G-Cter in ubiquitin); alternate. E36 carries the polyADP-ribosyl glutamic acid modification. S37 bears the Phosphoserine; by AMPK mark. Residues K44, K47, and K58 each carry the N6-(2-hydroxyisobutyryl)lysine; alternate modification. Residue K44 is modified to N6-lactoyllysine; alternate. K44 and K47 each carry N6-glutaryllysine; alternate. The residue at position 47 (K47) is an N6-methyllysine; alternate. N6,N6-dimethyllysine; alternate is present on K58. R80 is modified (dimethylated arginine). An N6-(2-hydroxyisobutyryl)lysine; alternate modification is found at K86. N6-acetyllysine; alternate is present on K86. K86 bears the N6-lactoyllysine; alternate mark. K86 carries the post-translational modification N6,N6,N6-trimethyllysine; alternate. Residues R87 and R93 each carry the omega-N-methylarginine modification. At K109 the chain carries N6-(2-hydroxyisobutyryl)lysine; alternate. K109 carries the post-translational modification N6-(beta-hydroxybutyryl)lysine; alternate. Position 109 is an N6-lactoyllysine; alternate (K109). N6-glutaryllysine; alternate is present on K109. K109 carries the post-translational modification N6-methyllysine; alternate. The O-linked (GlcNAc) serine glycan is linked to S113. Phosphothreonine is present on T116. N6-(2-hydroxyisobutyryl)lysine; alternate is present on residues K117 and K121. K117 is subject to N6-(beta-hydroxybutyryl)lysine; alternate. N6-lactoyllysine; alternate is present on residues K117 and K121. N6-glutaryllysine; alternate occurs at positions 117 and 121. K117 and K121 each carry N6-succinyllysine; alternate. Position 117 is an N6-methylated lysine; alternate (K117). A Glycyl lysine isopeptide (Lys-Gly) (interchain with G-Cter in ubiquitin); alternate cross-link involves residue K121.

This sequence belongs to the histone H2B family. In terms of assembly, the nucleosome is a histone octamer containing two molecules each of H2A, H2B, H3 and H4 assembled in one H3-H4 heterotetramer and two H2A-H2B heterodimers. The octamer wraps approximately 147 bp of DNA. In terms of processing, monoubiquitination at Lys-35 (H2BK34Ub) by the MSL1/MSL2 dimer is required for histone H3 'Lys-4' (H3K4me) and 'Lys-79' (H3K79me) methylation and transcription activation at specific gene loci, such as HOXA9 and MEIS1 loci. Similarly, monoubiquitination at Lys-121 (H2BK120Ub) by the RNF20/40 complex gives a specific tag for epigenetic transcriptional activation and is also prerequisite for histone H3 'Lys-4' and 'Lys-79' methylation. It also functions cooperatively with the FACT dimer to stimulate elongation by RNA polymerase II. H2BK120Ub also acts as a regulator of mRNA splicing: deubiquitination by USP49 is required for efficient cotranscriptional splicing of a large set of exons. Phosphorylated on Ser-15 (H2BS14ph) by STK4/MST1 during apoptosis; which facilitates apoptotic chromatin condensation. Also phosphorylated on Ser-15 in response to DNA double strand breaks (DSBs), and in correlation with somatic hypermutation and immunoglobulin class-switch recombination. Phosphorylation at Ser-37 (H2BS36ph) by AMPK in response to stress promotes transcription. Post-translationally, glcNAcylation at Ser-113 promotes monoubiquitination of Lys-121. It fluctuates in response to extracellular glucose, and associates with transcribed genes. In terms of processing, ADP-ribosylated by PARP1 or PARP2 on Ser-7 (H2BS6ADPr) in response to DNA damage. H2BS6ADPr promotes recruitment of CHD1L. Mono-ADP-ribosylated on Glu-3 (H2BE2ADPr) by PARP3 in response to single-strand breaks. Poly ADP-ribosylation on Glu-36 (H2BE35ADPr) by PARP1 regulates adipogenesis: it inhibits phosphorylation at Ser-37 (H2BS36ph), thereby blocking expression of pro-adipogenetic genes. Hydroxybutyrylation of histones is induced by starvation. Post-translationally, crotonylation (Kcr) is specifically present in male germ cells and marks testis-specific genes in post-meiotic cells, including X-linked genes that escape sex chromosome inactivation in haploid cells. Crotonylation marks active promoters and enhancers and confers resistance to transcriptional repressors. It is also associated with post-meiotically activated genes on autosomes. In terms of processing, lactylated in macrophages by EP300/P300 by using lactoyl-CoA directly derived from endogenous or exogenous lactate, leading to stimulates gene transcription.

The protein localises to the nucleus. The protein resides in the chromosome. Functionally, core component of nucleosome. Nucleosomes wrap and compact DNA into chromatin, limiting DNA accessibility to the cellular machineries which require DNA as a template. Histones thereby play a central role in transcription regulation, DNA repair, DNA replication and chromosomal stability. DNA accessibility is regulated via a complex set of post-translational modifications of histones, also called histone code, and nucleosome remodeling. The chain is Histone H2B type 1-B from Mus musculus (Mouse).